A 201-amino-acid chain; its full sequence is Recombination protein RecR (201 aa).

A C4-type zinc finger spans residues 60 to 75; that stretch reads CATCGNFDTVQPCAVC. Positions 83 to 178 constitute a Toprim domain; it reads GIICVVEDVP…DVTRLAHGVP (96 aa).

Belongs to the RecR family.

Functionally, may play a role in DNA repair. It seems to be involved in an RecBC-independent recombinational process of DNA repair. It may act with RecF and RecO. The polypeptide is Recombination protein RecR (Hyphomonas neptunium (strain ATCC 15444)).